The sequence spans 377 residues: Opsin, blue-sensitive (377 aa).

The Extracellular segment spans residues 1-56; the sequence is MLLHNKTLAGKALAFIAEEGYVPSMREKFLGWNVPPEYSDLVHPHWRAFPAPGKHF. N5 is a glycosylation site (N-linked (GlcNAc...) asparagine). Residues 57 to 81 form a helical membrane-spanning segment; sequence HIGLAIIYSMLLIMSLVGNCCVIWI. The Cytoplasmic segment spans residues 82–93; the sequence is FSTSKSLRTPSN. A helical transmembrane segment spans residues 94-119; it reads MFIVSLAIFDIIMAFEMPMLVISSFM. The Extracellular portion of the chain corresponds to 120–132; it reads ERMIGWEIGCDVY. A disulfide bridge links C129 with C206. Residues 133 to 152 traverse the membrane as a helical segment; that stretch reads SVFGSISGMGQAMTNAAIAF. The Cytoplasmic segment spans residues 153–170; that stretch reads DRYRTISCPIDGRLNSKQ. The helical transmembrane segment at 171-195 threads the bilayer; sequence AAVIIAFTWFWVTPFTVLPLLKVWG. Residues 196–219 are Extracellular-facing; the sequence is RYTTEGFLTTCSFDFLTDDEDTKV. The helical transmembrane segment at 220 to 247 threads the bilayer; it reads FVTCIFIWAYVIPLIFIILFYSRLLSSI. At 248–282 the chain is on the cytoplasmic side; that stretch reads RNHEKMLREQAKKMNVKSLVSNQDKERSAEVRIAK. A helical membrane pass occupies residues 283 to 306; the sequence is VAFTIFFLFLLAWTPYATVALIGV. The Extracellular portion of the chain corresponds to 307-314; it reads YGNRELLT. Residues 315 to 339 traverse the membrane as a helical segment; that stretch reads PVSTMLPAVFAKTVSCIDPWIYAIN. K326 carries the N6-(retinylidene)lysine modification. The Cytoplasmic segment spans residues 340-377; that stretch reads HPRYRQELQKRCKWMGIHEPETTSDATSAQTEKIKTDE.

This sequence belongs to the G-protein coupled receptor 1 family. Opsin subfamily. Post-translationally, phosphorylated on some or all of the serine and threonine residues present in the C-terminal region. Expressed in the dorsal region of the retina and sparsely expressed in the ventral region.

It localises to the membrane. In terms of biological role, visual pigments are the light-absorbing molecules that mediate vision. They consist of an apoprotein, opsin, covalently linked to 11-cis-retinal. This is Opsin, blue-sensitive (BLOP) from Apis mellifera (Honeybee).